A 572-amino-acid polypeptide reads, in one-letter code: Urocanate hydratase (572 aa).

NAD(+) contacts are provided by residues 48-49, Q126, 172-174, D192, 238-239, 259-263, 268-269, and Y317; these read GG, GMG, NA, QTSAH, and YL. The active site involves C405. G487 is an NAD(+) binding site. Residues 550–559 show a composition bias toward basic and acidic residues; that stretch reads EGDEAHEGDA. A disordered region spans residues 550–572; that stretch reads EGDEAHEGDAAHGSGAAREGDGV.

The protein belongs to the urocanase family. It depends on NAD(+) as a cofactor.

It is found in the cytoplasm. It carries out the reaction 4-imidazolone-5-propanoate = trans-urocanate + H2O. The protein operates within amino-acid degradation; L-histidine degradation into L-glutamate; N-formimidoyl-L-glutamate from L-histidine: step 2/3. Functionally, catalyzes the conversion of urocanate to 4-imidazolone-5-propionate. The protein is Urocanate hydratase of Streptomyces coelicolor (strain ATCC BAA-471 / A3(2) / M145).